Reading from the N-terminus, the 196-residue chain is Imidazole glycerol phosphate synthase subunit HisH (196 aa).

A Glutamine amidotransferase type-1 domain is found at 2–196; the sequence is NVVILDTGCA…AKLLKNFLEM (195 aa). Cys-77 acts as the Nucleophile in catalysis. Residues His-178 and Glu-180 contribute to the active site.

In terms of assembly, heterodimer of HisH and HisF.

It is found in the cytoplasm. It carries out the reaction 5-[(5-phospho-1-deoxy-D-ribulos-1-ylimino)methylamino]-1-(5-phospho-beta-D-ribosyl)imidazole-4-carboxamide + L-glutamine = D-erythro-1-(imidazol-4-yl)glycerol 3-phosphate + 5-amino-1-(5-phospho-beta-D-ribosyl)imidazole-4-carboxamide + L-glutamate + H(+). The catalysed reaction is L-glutamine + H2O = L-glutamate + NH4(+). The protein operates within amino-acid biosynthesis; L-histidine biosynthesis; L-histidine from 5-phospho-alpha-D-ribose 1-diphosphate: step 5/9. Functionally, IGPS catalyzes the conversion of PRFAR and glutamine to IGP, AICAR and glutamate. The HisH subunit catalyzes the hydrolysis of glutamine to glutamate and ammonia as part of the synthesis of IGP and AICAR. The resulting ammonia molecule is channeled to the active site of HisF. In Shigella dysenteriae serotype 1 (strain Sd197), this protein is Imidazole glycerol phosphate synthase subunit HisH.